Here is a 307-residue protein sequence, read N- to C-terminus: UDP-3-O-acyl-N-acetylglucosamine deacetylase (307 aa).

Positions 78, 241, and 245 each coordinate Zn(2+). The active-site Proton donor is the H268.

It belongs to the LpxC family. The cofactor is Zn(2+).

It carries out the reaction a UDP-3-O-[(3R)-3-hydroxyacyl]-N-acetyl-alpha-D-glucosamine + H2O = a UDP-3-O-[(3R)-3-hydroxyacyl]-alpha-D-glucosamine + acetate. It functions in the pathway glycolipid biosynthesis; lipid IV(A) biosynthesis; lipid IV(A) from (3R)-3-hydroxytetradecanoyl-[acyl-carrier-protein] and UDP-N-acetyl-alpha-D-glucosamine: step 2/6. Its function is as follows. Catalyzes the hydrolysis of UDP-3-O-myristoyl-N-acetylglucosamine to form UDP-3-O-myristoylglucosamine and acetate, the committed step in lipid A biosynthesis. The protein is UDP-3-O-acyl-N-acetylglucosamine deacetylase of Polaromonas naphthalenivorans (strain CJ2).